The chain runs to 1309 residues: Phospholipase A I (1309 aa).

4 LRR repeats span residues 155–178 (LPLL…IGKL), 180–201 (NLKI…LRQC), 203–223 (GLVE…DFRA), and 224–248 (MAGL…PLHQ). ARM repeat units lie at residues 315-356 (DEGN…SLAR), 401-439 (SVSQ…NLAF), and 440-481 (CLEN…ILGE). The PNPLA domain occupies 502–746 (LTMDGGGMKG…VANNPTIFAI (245 aa)). The GXGXXG signature appears at 506 to 511 (GGGMKG). Positions 538-542 (GTSTG) match the GXSXG motif. Serine 540 serves as the catalytic Nucleophile. Aspartate 733 functions as the Proton acceptor in the catalytic mechanism. Positions 733 to 735 (DGA) match the DGA/G motif. Residues 1183–1253 (VIGPSNEPQE…EDSDHEKTNR (71 aa)) are disordered. Over residues 1188–1208 (NEPQETPLITSQGSSEYNIGD) the composition is skewed to polar residues. Positions 1216–1235 (GEEEDEDEEVNEETEREEME) are enriched in acidic residues.

The protein belongs to the patatin family.

Its subcellular location is the plastid. The protein resides in the chloroplast. Its function is as follows. Possesses non-specific lipolytic acyl hydrolase (LAH) activity. Catalyzes the hydrolysis of the galactolipids monogalactosyldiacylglycerol (MGDG) and digalactosyldiacylglycerol (DGDG), and less efficiently the phoshpolipids phosphatidylcholine (PC), phosphatidylethanolamine (PE), phosphatidylglycerol (PG), phosphatidylserine (PS) and phosphatidylinositol (PI). Hydrolyzes phospholipids at both the sn-1 and sn-2 positions. Involved in basal jasmonic acid production and promotes resistance to the necrotrophic fungal pathogen Botrytis cinerea. The sequence is that of Phospholipase A I (PLA1) from Arabidopsis thaliana (Mouse-ear cress).